A 397-amino-acid polypeptide reads, in one-letter code: ORC1-type DNA replication protein 8 (397 aa).

ATP contacts are provided by residues 61–65, Y211, and R223; that span reads VGKTA.

This sequence belongs to the CDC6/cdc18 family.

In terms of biological role, involved in regulation of DNA replication. The sequence is that of ORC1-type DNA replication protein 8 (orc8) from Halobacterium salinarum (strain ATCC 700922 / JCM 11081 / NRC-1) (Halobacterium halobium).